The sequence spans 394 residues: Mannosyl-3-phosphoglycerate synthase (394 aa).

This sequence belongs to the glycosyltransferase 2 family.

The protein localises to the cytoplasm. It catalyses the reaction (2R)-3-phosphoglycerate + GDP-alpha-D-mannose = 2-O-(alpha-D-mannosyl)-3-phosphoglycerate + GDP + H(+). It participates in carbohydrate biosynthesis; 2-(alpha-D-mannosyl)-D-glycerate biosynthesis; 2-(alpha-D-mannosyl)-D-glycerate from GDP-alpha-D-mannose (MPG route): step 1/2. Functionally, transfers a mannosyl group from GDP-mannose to phosphoglycerate to form mannosyl-3-phosphoglycerate (MPG). The chain is Mannosyl-3-phosphoglycerate synthase (mngA) from Pyrococcus abyssi (strain GE5 / Orsay).